A 790-amino-acid chain; its full sequence is SH3 domain-containing protein 19 (790 aa).

2 disordered regions span residues 21 to 196 (EGQT…PVLQ) and 241 to 374 (EPIK…MDLQ). S65 carries the phosphoserine modification. Residues 287-296 (NTFSTVSGKL) show a composition bias toward polar residues. A compositionally biased stretch (pro residues) spans 336–351 (QQPPTKVPPERPPPPK). Residues 342–358 (VPPERPPPPKLSATRRS) form an interaction with SH3GL1 region. The span at 365-374 (NRSSSDMDLQ) shows a compositional bias: polar residues. S369 carries the post-translational modification Phosphoserine. 5 consecutive SH3 domains span residues 415-477 (LSVP…PLDE), 495-554 (SGAP…VIID), 571-630 (VKGS…PVED), 661-720 (LPAE…PCPA), and 730-789 (PKGR…FLQI). A Phosphoserine modification is found at S762.

Interacts with ADAM12. Isoform 4 and isoform 5 (but not isoform 1 and isoform 2) interact with ADAM9, ADAM10, ADAM15 and ADAM17. Interacts with SH3GL1 SH3 domain. Interacts via SH3 3 and SH3 4 or SH3 4 and SH3 5 domains with SOS2. Probably forms a trimeric complex with SH3GL1 and SOS2. Interacts with SH3YL1. In terms of tissue distribution, widely expressed with highest levels in heart, skeletal muscle, kidney, liver, placenta, small intestine and lung. Expressed at low levels in colon, thymus, spleen and leukocytes.

The protein resides in the cytoplasm. It is found in the nucleus. May play a role in regulating A disintegrin and metalloproteases (ADAMs) in the signaling of EGFR-ligand shedding. May be involved in suppression of Ras-induced cellular transformation and Ras-mediated activation of ELK1. Plays a role in the regulation of cell morphology and cytoskeletal organization. The polypeptide is SH3 domain-containing protein 19 (SH3D19) (Homo sapiens (Human)).